Reading from the N-terminus, the 267-residue chain is Large ribosomal subunit protein uL4 (267 aa).

Belongs to the universal ribosomal protein uL4 family. As to quaternary structure, part of the 50S ribosomal subunit.

Functionally, one of the primary rRNA binding proteins, this protein initially binds near the 5'-end of the 23S rRNA. It is important during the early stages of 50S assembly. It makes multiple contacts with different domains of the 23S rRNA in the assembled 50S subunit and ribosome. Its function is as follows. Forms part of the polypeptide exit tunnel. The chain is Large ribosomal subunit protein uL4 from Saccharolobus islandicus (strain Y.N.15.51 / Yellowstone #2) (Sulfolobus islandicus).